The primary structure comprises 247 residues: SATTFYDCRECGKRYTKRNNLYIHQRVHVKEKPFPCTECGKGFSHKSQLIIHQRVHTGEKPFICSECGKGFSKNYGLILHLRVHTGEKPFVCTECGQRFSKNNVLSMHQRVHTGEKPFTCTECGKRFSQKRQLNLHLRVHTGEKPFVCTECGKRFSKNDVLLIHLRVHTGEKPFMCADCGRCFSVSSSLKYHQRICTGKKPLTSTECGESFKLNLNPIIHAEESQSCAECGKCFSSNYNLSLHMRVH.

8 consecutive C2H2-type zinc fingers follow at residues 6-28 (YDCRECGKRYTKRNNLYIHQRVH), 34-56 (FPCTECGKGFSHKSQLIIHQRVH), 62-84 (FICSECGKGFSKNYGLILHLRVH), 90-112 (FVCTECGQRFSKNNVLSMHQRVH), 118-140 (FTCTECGKRFSQKRQLNLHLRVH), 146-168 (FVCTECGKRFSKNDVLLIHLRVH), 174-196 (FMCADCGRCFSVSSSLKYHQRIC), and 225-247 (QSCAECGKCFSSNYNLSLHMRVH).

Belongs to the krueppel C2H2-type zinc-finger protein family.

It is found in the nucleus. In terms of biological role, may be involved in transcriptional regulation. The sequence is that of Oocyte zinc finger protein XlCOF20 from Xenopus laevis (African clawed frog).